Reading from the N-terminus, the 312-residue chain is Protoheme IX farnesyltransferase 1 (312 aa).

9 consecutive transmembrane segments (helical) span residues 21–41 (GVLAAYLALTKPRVIELLLVT), 53–73 (IPSPWLVLVTLAGGAMSAGSA), 105–125 (SALVFGIVLGVVSFAVLALGA), 127–147 (LLAAVLSLAAILFYVFVYTLV), 156–176 (IVWGGAAGCMPVVIGWAAVTG), 182–202 (ALVMFGVVFLWTPPHFWSLAM), 225–245 (VSARILVYSWATVACTLLLVP), 246–266 (ATSWVYVAFAVLAGAAFLIVA), and 292–312 (LALLFVAIAVDSAVGLPSFVA).

The protein belongs to the UbiA prenyltransferase family. Protoheme IX farnesyltransferase subfamily.

It localises to the cell membrane. It catalyses the reaction heme b + (2E,6E)-farnesyl diphosphate + H2O = Fe(II)-heme o + diphosphate. The protein operates within porphyrin-containing compound metabolism; heme O biosynthesis; heme O from protoheme: step 1/1. Functionally, converts heme B (protoheme IX) to heme O by substitution of the vinyl group on carbon 2 of heme B porphyrin ring with a hydroxyethyl farnesyl side group. The sequence is that of Protoheme IX farnesyltransferase 1 from Saccharopolyspora erythraea (strain ATCC 11635 / DSM 40517 / JCM 4748 / NBRC 13426 / NCIMB 8594 / NRRL 2338).